The chain runs to 142 residues: Snaclec GPIB-binding protein subunit alpha (142 aa).

3 disulfide bridges follow: C6-C17, C39-C136, and C111-C128. In terms of domain architecture, C-type lectin spans H13 to K137.

The protein belongs to the snaclec family. In terms of assembly, heterodimer of subunits alpha and beta; disulfide-linked. As to expression, expressed by the venom gland.

Its subcellular location is the secreted. In terms of biological role, binds to platelet GPIb (subunit alpha) (GP1BA) and functions as a receptor blocker for vWF binding to GPIb. The platelet GPIb-binding site resides on the GPIB-BP subunit beta and not on the alpha subunit. At a final concentration of 104 nM totally abolishes vWF-dependent shear-induced platelet aggregation (SIPA) at a high shear stress, but had no effect on SIPA at a low shear stress. In Bothrops jararaca (Jararaca), this protein is Snaclec GPIB-binding protein subunit alpha.